Reading from the N-terminus, the 232-residue chain is Thiamine import ATP-binding protein ThiQ (232 aa).

An ABC transporter domain is found at 2 to 230 (LKLTDITWLY…KASASALLGI (229 aa)). ATP is bound at residue 32–39 (GPSGAGKS).

This sequence belongs to the ABC transporter superfamily. Thiamine importer (TC 3.A.1.19.1) family. In terms of assembly, the complex is composed of two ATP-binding proteins (ThiQ), two transmembrane proteins (ThiP) and a solute-binding protein (ThiB).

The protein resides in the cell inner membrane. The enzyme catalyses thiamine(out) + ATP + H2O = thiamine(in) + ADP + phosphate + H(+). Part of the ABC transporter complex ThiBPQ involved in thiamine import. Responsible for energy coupling to the transport system. This is Thiamine import ATP-binding protein ThiQ from Escherichia coli (strain K12).